The sequence spans 485 residues: MENRLRDTSRVVRSHAAPLNEVTQEDLKVERLHGRKYMNPSKKHVMREEFSDKIEHIMHDPRPQEGVHSELPVSISPLLCELAAPRQRIHFNPPETVVGIVTCGGICPGLNDVIRSLTLTAVNAYRVKRVIGFRFGYWGLSKKGSHTAMELYRTSVTSIHRYGGTILGSSRGPQDTSEMVDTLERLGVNILFTVGGDGTQRGALKIAEEAKRRGANLAVFGIPKTIDNDLSFSHRTFGFETAVDKAVEAVRAAYAEAISLNYGVGVVKLMGRDSGFIAAEAAVASAQANICLVPENPISEDIVMALIQRRFETSRSCVIIVAEGFGQDWEGGTGGHDASGNKKLTDIGVVLTKRIQAWLRKNKERYPNGTVKYIDPSYMIRACPPSANDALFCATLSTLAMHEAMAGATNCIIALRYNSYILVPIKVATSVRRVLDLRGQLWRQVREITVGLQDDVRAFKEAEVRRELEAISLVRERLIGQLSKL.

ATP is bound by residues Gly105, 171–172 (RG), and 196–199 (GDGT). Asp197 is a Mg(2+) binding site. Substrate is bound by residues 225–227 (TID), 270–272 (MGR), Glu323, and 378–381 (YMIR). Catalysis depends on Asp227, which acts as the Proton acceptor. Residues 483–485 (SKL) carry the Peroxisomal targeting signal motif.

This sequence belongs to the phosphofructokinase type A (PFKA) family. PPi-dependent PFK group II subfamily. Atypical ATP-dependent clade 'X' sub-subfamily. In terms of assembly, homotetramer. It depends on Mg(2+) as a cofactor.

It localises to the glycosome. It catalyses the reaction beta-D-fructose 6-phosphate + ATP = beta-D-fructose 1,6-bisphosphate + ADP + H(+). It participates in carbohydrate degradation; glycolysis; D-glyceraldehyde 3-phosphate and glycerone phosphate from D-glucose: step 3/4. Allosterically activated by AMP. Its function is as follows. Catalyzes the phosphorylation of D-fructose 6-phosphate to fructose 1,6-bisphosphate by ATP, the first committing step of glycolysis. The chain is ATP-dependent 6-phosphofructokinase from Trypanosoma cruzi (strain CL Brener).